The following is a 968-amino-acid chain: Breast cancer anti-estrogen resistance protein 1 (968 aa).

M1 is subject to N-acetylmethionine. The 63-residue stretch at 97 to 159 folds into the SH3 domain; sequence DKNVLAKALY…PGNRLKILVG (63 aa). The disordered stretch occupies residues 164 to 277; that stretch reads KPAAPGPGPP…GPGSPAQDIY (114 aa). Residues 167 to 182 show a composition bias toward pro residues; it reads APGPGPPATPPQPQPS. Residues 213–514 are substrate for kinases; it reads YLVPTPSKTQ…DGVYAVPPPA (302 aa). A Phosphotyrosine; by SRC modification is found at Y226. Residues 233–249 show a composition bias toward polar residues; that stretch reads PQFQSPPAKQTSTFSKQ. S237 is modified (phosphoserine). Y332 carries the post-translational modification Phosphotyrosine. Y347 is modified (phosphotyrosine; by ABL1). T367 carries the post-translational modification Phosphothreonine. A Phosphoserine modification is found at S390. A disordered region spans residues 393–416; it reads KGLPPSNHHSVYDVPPSVSKDVPD. Phosphotyrosine occurs at positions 460, 470, and 508. Disordered regions lie at residues 503–544 and 705–756; these read IDDG…SLEV and RTKA…NSEG. Positions 514-524 are enriched in basic and acidic residues; the sequence is AEREAPTDGKR. Low complexity predominate over residues 525-542; sequence LSASSTGSTRSSQSASSL. A phosphoserine mark is found at S526, S535, and S737. Residues 715-753 are compositionally biased toward polar residues; that stretch reads GSSSLHLNPTDKASSIQSRPLPSPPKFTSQDSPDGQYEN. The short motif at 733-741 is the SH3-binding element; it reads RPLPSPPKF. A divergent helix-loop-helix motif region spans residues 844-894; it reads FYLEQCEANLTTLTDAVDAFFTAVATNQPPKIFVAHSKFVILSAHKLVFIG.

It belongs to the CAS family. Forms complexes in vivo with PTK2/FAK1, adapter protein CRKL and LYN kinase. Can heterodimerize with NEDD9. Component of a complex comprised of SH2D3C, BCAR1/CAS, and CRK. Within the complex, interacts with SH2D3C (via C-terminus), and CRK. Part of a complex comprised of PTPRA, BCAR1, BCAR3 (via SH2 domain) and SRC; the formation of the complex is dependent on integrin mediated-tyrosine phosphorylation of PTPRA. Interacts with BCAR3 (via Ras-GEF domain); the interaction regulates adhesion-dependent serine phosphorylation. Interacts with SMAD2 and SMAD3. Interacts with NPHP1. Interacts with PTK2B/PYK2. Interacts (via C-terminus) with SH2D3C/CHAT isoform 2 (via C-terminus). Interacts with activated CSPG4. Interacts with BMX, INPPL1/SHIP2 and PEAK1. Part of a collagen stimulated complex involved in cell migration composed of CDC42, CRK, TNK2 and BCAR1/p130cas. Interacts with TNK2 via SH3 domains. Interacts with PTK2B/PYK2. Interacts (when tyrosine-phosphorylated) with tensin TNS1; the interaction is increased by phosphorylation of TNS1. In terms of processing, PTK2/FAK1 activation mediates phosphorylation at the YDYVHL motif; phosphorylation is most likely catalyzed by SRC family members. SRC-family kinases are recruited to the phosphorylated sites and can phosphorylate other tyrosine residues. Tyrosine phosphorylation is triggered by integrin mediated adhesion of cells to the extracellular matrix. Phosphorylated by SRC kinase in a EDN1- and PTK2B-mediated manner; phosphorylation strengthens its interaction with BCAR3 as part of the PTK2B/BCAR1/BCAR3/RAP1 signaling pathway. Post-translationally, dephosphorylated by PTPN14 at Tyr-226. As to expression, widely expressed. Higher expression in lung, intestine and testis.

The protein resides in the cell junction. The protein localises to the focal adhesion. Its subcellular location is the cytoplasm. It is found in the cell projection. It localises to the axon. In terms of biological role, docking protein which plays a central coordinating role for tyrosine-kinase-based signaling related to cell adhesion. Implicated in induction of cell migration and cell branching. Involved in the BCAR3-mediated inhibition of TGFB signaling. The chain is Breast cancer anti-estrogen resistance protein 1 (Bcar1) from Rattus norvegicus (Rat).